The sequence spans 456 residues: CBL-interacting serine/threonine-protein kinase 2 (456 aa).

The 255-residue stretch at 12-266 (YEVGRLLGQG…IAKIKESSWF (255 aa)) folds into the Protein kinase domain. ATP contacts are provided by residues 18–26 (LGQGTFAKV) and Lys41. Catalysis depends on Asp134, which acts as the Proton acceptor. Residues 152–181 (DFGLSALADCKRQDGLLHTTCGTPAYVAPE) are activation loop. Phosphoserine is present on Ser156. The residue at position 170 (Thr170) is a Phosphothreonine. Positions 280–309 (MEKQQVREATNPMEAGGSGQNENGENHEPP) are disordered. The 25-residue stretch at 309–333 (PRLATLNAFDIIALSTGFGLAGLFG) folds into the NAF domain. The interval 338–367 (KRESRFASQKPASEIISKLVEVAKCLKLKI) is PPI.

This sequence belongs to the protein kinase superfamily. CAMK Ser/Thr protein kinase family. SNF1 subfamily. In terms of assembly, interacts with CBL2, CBL3 and CBL5. Mn(2+) is required as a cofactor.

It catalyses the reaction L-seryl-[protein] + ATP = O-phospho-L-seryl-[protein] + ADP + H(+). The catalysed reaction is L-threonyl-[protein] + ATP = O-phospho-L-threonyl-[protein] + ADP + H(+). CIPK serine-threonine protein kinases interact with CBL proteins. Binding of a CBL protein to the regulatory NAF domain of CIPK protein lead to the activation of the kinase in a calcium-dependent manner. The sequence is that of CBL-interacting serine/threonine-protein kinase 2 (CIPK2) from Arabidopsis thaliana (Mouse-ear cress).